The primary structure comprises 130 residues: Small ribosomal subunit protein uS8 (130 aa).

Belongs to the universal ribosomal protein uS8 family. In terms of assembly, part of the 30S ribosomal subunit. Contacts proteins S5 and S12.

Functionally, one of the primary rRNA binding proteins, it binds directly to 16S rRNA central domain where it helps coordinate assembly of the platform of the 30S subunit. In Cereibacter sphaeroides (strain KD131 / KCTC 12085) (Rhodobacter sphaeroides), this protein is Small ribosomal subunit protein uS8.